A 143-amino-acid polypeptide reads, in one-letter code: Transcriptional regulator MraZ (143 aa).

2 consecutive SpoVT-AbrB domains span residues 5–47 (THTP…PMQE) and 76–119 (ASSE…DLRT).

Belongs to the MraZ family. In terms of assembly, forms oligomers.

The protein localises to the cytoplasm. It is found in the nucleoid. In Kineococcus radiotolerans (strain ATCC BAA-149 / DSM 14245 / SRS30216), this protein is Transcriptional regulator MraZ.